The sequence spans 27 residues: Putative phosphoglycerate kinase (27 aa).

It belongs to the phosphoglycerate kinase family. As to quaternary structure, monomer. The cofactor is Mg(2+).

It carries out the reaction (2R)-3-phosphoglycerate + ATP = (2R)-3-phospho-glyceroyl phosphate + ADP. This Pinus strobus (Eastern white pine) protein is Putative phosphoglycerate kinase.